The primary structure comprises 277 residues: Large ribosomal subunit protein uL2 (277 aa).

Disordered regions lie at residues 24–55 (ITTS…RHHG) and 221–277 (RGSV…RKKK).

This sequence belongs to the universal ribosomal protein uL2 family. Part of the 50S ribosomal subunit. Forms a bridge to the 30S subunit in the 70S ribosome.

One of the primary rRNA binding proteins. Required for association of the 30S and 50S subunits to form the 70S ribosome, for tRNA binding and peptide bond formation. It has been suggested to have peptidyltransferase activity; this is somewhat controversial. Makes several contacts with the 16S rRNA in the 70S ribosome. The polypeptide is Large ribosomal subunit protein uL2 (Listeria innocua serovar 6a (strain ATCC BAA-680 / CLIP 11262)).